The primary structure comprises 381 residues: Testis-specific expressed protein 55 (381 aa).

Disordered stretches follow at residues 1–176 (MDEP…SDPH) and 292–317 (TTEY…QSSR). 2 stretches are compositionally biased toward basic and acidic residues: residues 8–24 (SLNH…EKNN) and 65–103 (RTSE…ERRT). The span at 104–113 (SQPPNQQLPS) shows a compositional bias: polar residues. The span at 114–125 (HSERKTSGKIDG) shows a compositional bias: basic and acidic residues. Over residues 134-143 (TDQETSEFDD) the composition is skewed to acidic residues. 2 stretches are compositionally biased toward polar residues: residues 147–163 (SAST…QEYN) and 292–302 (TTEYTSDTTPV). Residues 307-317 (RSSQRSSQSSR) show a composition bias toward low complexity.

As to expression, testis-specific.

It localises to the nucleus. This chain is Testis-specific expressed protein 55, found in Mus musculus (Mouse).